We begin with the raw amino-acid sequence, 163 residues long: Single-stranded DNA-binding protein 1 (163 aa).

The SSB domain maps to 1–104; that stretch reads MINNVVLVGR…VVAESFQLLE (104 aa). The segment at 106–163 is disordered; sequence RATREGGSPNSYNNGGYNNAPSNNSYSASSQQTPNFSRDESPFGNSNPMDISDDDLPF. The span at 111-135 shows a compositional bias: low complexity; the sequence is GGSPNSYNNGGYNNAPSNNSYSASS. The Important for interaction with partner proteins motif lies at 158–163; it reads DDDLPF.

Homotetramer.

Its function is as follows. Plays an important role in DNA replication, recombination and repair. Binds to ssDNA and to an array of partner proteins to recruit them to their sites of action during DNA metabolism. The polypeptide is Single-stranded DNA-binding protein 1 (ssb1) (Streptococcus agalactiae serotype III (strain NEM316)).